The sequence spans 400 residues: Probable tRNA pseudouridine synthase D (400 aa).

D89 (nucleophile) is an active-site residue. The region spanning G162 to L357 is the TRUD domain.

It belongs to the pseudouridine synthase TruD family.

It catalyses the reaction uridine(13) in tRNA = pseudouridine(13) in tRNA. In terms of biological role, could be responsible for synthesis of pseudouridine from uracil-13 in transfer RNAs. The polypeptide is Probable tRNA pseudouridine synthase D (Methanopyrus kandleri (strain AV19 / DSM 6324 / JCM 9639 / NBRC 100938)).